The sequence spans 195 residues: Urease accessory protein UreG (195 aa).

9 to 16 (GPVGSGKT) provides a ligand contact to GTP.

Belongs to the SIMIBI class G3E GTPase family. UreG subfamily. In terms of assembly, homodimer. UreD, UreF and UreG form a complex that acts as a GTP-hydrolysis-dependent molecular chaperone, activating the urease apoprotein by helping to assemble the nickel containing metallocenter of UreC. The UreE protein probably delivers the nickel.

Its subcellular location is the cytoplasm. Facilitates the functional incorporation of the urease nickel metallocenter. This process requires GTP hydrolysis, probably effectuated by UreG. The chain is Urease accessory protein UreG from Aliarcobacter butzleri (strain RM4018) (Arcobacter butzleri).